The chain runs to 385 residues: Acetate kinase (385 aa).

N9 provides a ligand contact to Mg(2+). Position 16 (K16) interacts with ATP. Position 87 (R87) interacts with substrate. D144 acts as the Proton donor/acceptor in catalysis. Residues 202–206 and 277–279 contribute to the ATP site; these read HLGSG and DMR. Residue E373 coordinates Mg(2+).

This sequence belongs to the acetokinase family. In terms of assembly, homodimer. It depends on Mg(2+) as a cofactor. The cofactor is Mn(2+).

It localises to the cytoplasm. The enzyme catalyses acetate + ATP = acetyl phosphate + ADP. It functions in the pathway metabolic intermediate biosynthesis; acetyl-CoA biosynthesis; acetyl-CoA from acetate: step 1/2. Functionally, catalyzes the formation of acetyl phosphate from acetate and ATP. Can also catalyze the reverse reaction. The chain is Acetate kinase from Rickettsia prowazekii (strain Madrid E).